Consider the following 304-residue polypeptide: Sulfate adenylyltransferase subunit 2 2 (304 aa).

This sequence belongs to the PAPS reductase family. CysD subfamily. In terms of assembly, heterodimer composed of CysD, the smaller subunit, and CysN.

The enzyme catalyses sulfate + ATP + H(+) = adenosine 5'-phosphosulfate + diphosphate. The protein operates within sulfur metabolism; hydrogen sulfide biosynthesis; sulfite from sulfate: step 1/3. Its function is as follows. With CysN forms the ATP sulfurylase (ATPS) that catalyzes the adenylation of sulfate producing adenosine 5'-phosphosulfate (APS) and diphosphate, the first enzymatic step in sulfur assimilation pathway. APS synthesis involves the formation of a high-energy phosphoric-sulfuric acid anhydride bond driven by GTP hydrolysis by CysN coupled to ATP hydrolysis by CysD. This chain is Sulfate adenylyltransferase subunit 2 2, found in Marinobacter nauticus (strain ATCC 700491 / DSM 11845 / VT8) (Marinobacter aquaeolei).